The following is a 343-amino-acid chain: Phosphate acyltransferase (343 aa).

The protein belongs to the PlsX family. In terms of assembly, homodimer. Probably interacts with PlsY.

The protein localises to the cytoplasm. It carries out the reaction a fatty acyl-[ACP] + phosphate = an acyl phosphate + holo-[ACP]. Its pathway is lipid metabolism; phospholipid metabolism. Catalyzes the reversible formation of acyl-phosphate (acyl-PO(4)) from acyl-[acyl-carrier-protein] (acyl-ACP). This enzyme utilizes acyl-ACP as fatty acyl donor, but not acyl-CoA. The sequence is that of Phosphate acyltransferase from Coxiella burnetii (strain RSA 331 / Henzerling II).